Consider the following 85-residue polypeptide: Arminin 6494 (85 aa).

The signal sequence occupies residues 1-18 (MKTVFAILFLAFIALTYA). A propeptide spanning residues 19-57 (RSYEDVKEEIKNEVEKEILEDLEEESDELNDKRKEINDA) is cleaved from the precursor. Position 82 is an alanine amide (alanine 82).

The protein belongs to the arminin family. As to expression, expressed in entodermal epithelium along the body column.

It localises to the secreted. It is found in the target cell membrane. In terms of biological role, antimicrobial peptide with a broad-spectrum antimicrobial activity. Keeps its antibacterial activity under a wide range of salt concentrations that mimic physiological conditions of human blood, which is surprising, since Hydra is an obligate freshwater animal with nearly no salt tolerance. Does not affect red blood cells. The chain is Arminin 6494 from Hydra vulgaris (Hydra).